A 461-amino-acid chain; its full sequence is Bifunctional protein GlmU (461 aa).

The pyrophosphorylase stretch occupies residues 1-229 (MLKKEINVVI…CKEILGVNNK (229 aa)). Residues 11–14 (LAAG), Lys-25, Gln-76, 81–82 (GT), 103–105 (YGD), Gly-140, Glu-154, and Asn-227 each bind UDP-N-acetyl-alpha-D-glucosamine. Asp-105 is a Mg(2+) binding site. Asn-227 serves as a coordination point for Mg(2+). Residues 230 to 250 (LQLSILEKIFRKKQVNDLLLS) are linker. Positions 251–461 (GVTLKDPNHF…PQKIIKKTDQ (211 aa)) are N-acetyltransferase. 2 residues coordinate UDP-N-acetyl-alpha-D-glucosamine: Arg-333 and Lys-351. Catalysis depends on His-363, which acts as the Proton acceptor. Positions 366 and 377 each coordinate UDP-N-acetyl-alpha-D-glucosamine. Acetyl-CoA contacts are provided by residues Ala-380, 386–387 (NY), and Ala-423.

This sequence in the N-terminal section; belongs to the N-acetylglucosamine-1-phosphate uridyltransferase family. In the C-terminal section; belongs to the transferase hexapeptide repeat family. As to quaternary structure, homotrimer. The cofactor is Mg(2+).

It is found in the cytoplasm. The enzyme catalyses alpha-D-glucosamine 1-phosphate + acetyl-CoA = N-acetyl-alpha-D-glucosamine 1-phosphate + CoA + H(+). The catalysed reaction is N-acetyl-alpha-D-glucosamine 1-phosphate + UTP + H(+) = UDP-N-acetyl-alpha-D-glucosamine + diphosphate. It functions in the pathway nucleotide-sugar biosynthesis; UDP-N-acetyl-alpha-D-glucosamine biosynthesis; N-acetyl-alpha-D-glucosamine 1-phosphate from alpha-D-glucosamine 6-phosphate (route II): step 2/2. The protein operates within nucleotide-sugar biosynthesis; UDP-N-acetyl-alpha-D-glucosamine biosynthesis; UDP-N-acetyl-alpha-D-glucosamine from N-acetyl-alpha-D-glucosamine 1-phosphate: step 1/1. It participates in bacterial outer membrane biogenesis; LPS lipid A biosynthesis. In terms of biological role, catalyzes the last two sequential reactions in the de novo biosynthetic pathway for UDP-N-acetylglucosamine (UDP-GlcNAc). The C-terminal domain catalyzes the transfer of acetyl group from acetyl coenzyme A to glucosamine-1-phosphate (GlcN-1-P) to produce N-acetylglucosamine-1-phosphate (GlcNAc-1-P), which is converted into UDP-GlcNAc by the transfer of uridine 5-monophosphate (from uridine 5-triphosphate), a reaction catalyzed by the N-terminal domain. This chain is Bifunctional protein GlmU, found in Buchnera aphidicola subsp. Schizaphis graminum (strain Sg).